Consider the following 667-residue polypeptide: Chaperone protein DnaK (667 aa).

Position 196 is a phosphothreonine; by autocatalysis (T196). 2 disordered regions span residues 495–525 (EANS…RKER) and 595–667 (AGEE…GDDE). A compositionally biased stretch (basic and acidic residues) spans 506–525 (EKMKEEAEQHAEEDERRKER). Residues 595 to 612 (AGEEIREAQQQQAQQGAA) show a composition bias toward low complexity. Positions 630 to 641 (GPAGGPTGGPAS) are enriched in gly residues. Acidic residues predominate over residues 647 to 667 (DSDEEDVQDADYEVVDEGDDE).

Belongs to the heat shock protein 70 family.

Acts as a chaperone. This chain is Chaperone protein DnaK, found in Salinibacter ruber (strain DSM 13855 / M31).